Reading from the N-terminus, the 931-residue chain is Beta-mannosidase A (931 aa).

The signal sequence occupies residues 1-21 (MRHSIGLAAALLAPTLPVALG). N-linked (GlcNAc...) asparagine glycans are attached at residues asparagine 40, asparagine 79, asparagine 247, asparagine 282, asparagine 316, asparagine 326, and asparagine 347. Residue glutamate 479 is the Proton donor of the active site. N-linked (GlcNAc...) asparagine glycosylation is found at asparagine 550, asparagine 608, asparagine 658, asparagine 738, asparagine 790, asparagine 798, asparagine 830, and asparagine 918.

The protein belongs to the glycosyl hydrolase 2 family. Beta-mannosidase A subfamily. As to quaternary structure, homodimer.

It localises to the secreted. The catalysed reaction is Hydrolysis of terminal, non-reducing beta-D-mannose residues in beta-D-mannosides.. It functions in the pathway glycan metabolism; N-glycan degradation. Functionally, exoglycosidase that cleaves the single beta-linked mannose residue from the non-reducing end of beta-mannosidic oligosaccharides of various complexity and length. Involved in the degradation of polymeric mannan and galactomannan. The polypeptide is Beta-mannosidase A (mndA) (Aspergillus niger (strain ATCC MYA-4892 / CBS 513.88 / FGSC A1513)).